A 300-amino-acid chain; its full sequence is 4-hydroxy-tetrahydrodipicolinate synthase (300 aa).

Thr55 contacts pyruvate. Tyr143 (proton donor/acceptor) is an active-site residue. Lys171 functions as the Schiff-base intermediate with substrate in the catalytic mechanism. Residue Ile211 participates in pyruvate binding.

Belongs to the DapA family. As to quaternary structure, homotetramer; dimer of dimers.

Its subcellular location is the cytoplasm. It catalyses the reaction L-aspartate 4-semialdehyde + pyruvate = (2S,4S)-4-hydroxy-2,3,4,5-tetrahydrodipicolinate + H2O + H(+). It functions in the pathway amino-acid biosynthesis; L-lysine biosynthesis via DAP pathway; (S)-tetrahydrodipicolinate from L-aspartate: step 3/4. Catalyzes the condensation of (S)-aspartate-beta-semialdehyde [(S)-ASA] and pyruvate to 4-hydroxy-tetrahydrodipicolinate (HTPA). This chain is 4-hydroxy-tetrahydrodipicolinate synthase, found in Mycolicibacterium paratuberculosis (strain ATCC BAA-968 / K-10) (Mycobacterium paratuberculosis).